A 191-amino-acid chain; its full sequence is Imidazoleglycerol-phosphate dehydratase (191 aa).

Belongs to the imidazoleglycerol-phosphate dehydratase family.

It localises to the cytoplasm. The catalysed reaction is D-erythro-1-(imidazol-4-yl)glycerol 3-phosphate = 3-(imidazol-4-yl)-2-oxopropyl phosphate + H2O. Its pathway is amino-acid biosynthesis; L-histidine biosynthesis; L-histidine from 5-phospho-alpha-D-ribose 1-diphosphate: step 6/9. The polypeptide is Imidazoleglycerol-phosphate dehydratase (Thermodesulfovibrio yellowstonii (strain ATCC 51303 / DSM 11347 / YP87)).